The chain runs to 239 residues: tRNA (guanine-N(1)-)-methyltransferase (239 aa).

S-adenosyl-L-methionine-binding positions include glycine 108 and 127–132 (LGDFVL).

It belongs to the RNA methyltransferase TrmD family. As to quaternary structure, homodimer.

It localises to the cytoplasm. It carries out the reaction guanosine(37) in tRNA + S-adenosyl-L-methionine = N(1)-methylguanosine(37) in tRNA + S-adenosyl-L-homocysteine + H(+). Functionally, specifically methylates guanosine-37 in various tRNAs. This Streptococcus pyogenes serotype M6 (strain ATCC BAA-946 / MGAS10394) protein is tRNA (guanine-N(1)-)-methyltransferase.